The following is a 617-amino-acid chain: Regulatory solute carrier protein family 1 member 1 (617 aa).

Positions 1–22 (MSSLPTSDGFNHPARSSGQSPD) are enriched in polar residues. Disordered regions lie at residues 1-106 (MSSL…EITV), 155-181 (ENQN…VAQQ), and 217-237 (KGNG…IPSS). 2 stretches are compositionally biased toward basic and acidic residues: residues 43-52 (SDSDRIEPKA) and 66-83 (SEKK…HASS). 2 stretches are compositionally biased toward polar residues: residues 89–103 (TDQS…SSEE) and 155–165 (ENQNLSQVSDP). The interval 410-412 (QCP) is involved in post-transcriptional down-regulation of SLC5A1. In terms of domain architecture, UBA spans 571–611 (IFPATDIDRILRAGFTLQEALGALHRVGGNADLALLVLLAK).

Interacts with YRDC. As to expression, expressed in small intestine, kidney and brain.

The protein resides in the cell membrane. It is found in the nucleus. It localises to the golgi apparatus. The protein localises to the trans-Golgi network. Functionally, mediates transcriptional and post-transcriptional regulation of SLC5A1. Inhibits a dynamin and PKC-dependent exocytotic pathway of SLC5A1. Also involved in transcriptional regulation of SLC22A2. Exhibits glucose-dependent, short-term inhibition of SLC5A1 and SLC22A2 by inhibiting the release of vesicles from the trans-Golgi network. This is Regulatory solute carrier protein family 1 member 1 (RSC1A1) from Homo sapiens (Human).